We begin with the raw amino-acid sequence, 427 residues long: Tryptophan synthase beta chain (427 aa).

An N6-(pyridoxal phosphate)lysine modification is found at K100.

This sequence belongs to the TrpB family. Tetramer of two alpha and two beta chains. Pyridoxal 5'-phosphate is required as a cofactor.

The enzyme catalyses (1S,2R)-1-C-(indol-3-yl)glycerol 3-phosphate + L-serine = D-glyceraldehyde 3-phosphate + L-tryptophan + H2O. Its pathway is amino-acid biosynthesis; L-tryptophan biosynthesis; L-tryptophan from chorismate: step 5/5. Its function is as follows. The beta subunit is responsible for the synthesis of L-tryptophan from indole and L-serine. The sequence is that of Tryptophan synthase beta chain (trpB) from Streptomyces coelicolor (strain ATCC BAA-471 / A3(2) / M145).